A 299-amino-acid chain; its full sequence is Sulfotransferase 1B1 (299 aa).

Residue 48–53 participates in 3'-phosphoadenylyl sulfate binding; it reads KSGTTW. Substrate is bound at residue 107–109; the sequence is KTH. Histidine 109 (proton acceptor) is an active-site residue. 3'-phosphoadenylyl sulfate-binding positions include arginine 131, serine 139, tyrosine 194, 228 to 233, and 258 to 260; these read TSFEMM and RKG.

This sequence belongs to the sulfotransferase 1 family. As to expression, liver specific.

The protein localises to the cytoplasm. It carries out the reaction a phenol + 3'-phosphoadenylyl sulfate = an aryl sulfate + adenosine 3',5'-bisphosphate + H(+). The catalysed reaction is 3,3',5-triiodo-L-thyronine + 3'-phosphoadenylyl sulfate = 3,3',5-triiodo-L-thyronine sulfate + adenosine 3',5'-bisphosphate + H(+). It catalyses the reaction 3,3',5'-triiodo-L-thyronine + 3'-phosphoadenylyl sulfate = 3,3',5'-triiodo-L-thyronine sulfate + adenosine 3',5'-bisphosphate + H(+). The enzyme catalyses 3,3'-diiodo-L-thyronine + 3'-phosphoadenylyl sulfate = 3,3'-diiodo-L-thyronine sulfate + adenosine 3',5'-bisphosphate + H(+). It carries out the reaction dopamine + 3'-phosphoadenylyl sulfate = dopamine 3-O-sulfate + adenosine 3',5'-bisphosphate + H(+). The catalysed reaction is dopamine + 3'-phosphoadenylyl sulfate = dopamine 4-O-sulfate + adenosine 3',5'-bisphosphate + H(+). It catalyses the reaction 4-ethylphenol + 3'-phosphoadenylyl sulfate = 4-ethylphenyl sulfate + adenosine 3',5'-bisphosphate + H(+). Its function is as follows. Sulfotransferase that utilizes 3'-phospho-5'-adenylyl sulfate (PAPS) as sulfonate donor to catalyze the sulfate conjugation of dopamine, small phenols such as 1-naphthol and p-nitrophenol and thyroid hormones, including 3,3'-diiodothyronine, triidothyronine (T3) and reverse triiodothyronine (rT3). May play a role in gut microbiota-host metabolic interaction. O-sulfonates 4-ethylphenol (4-EP), a dietary tyrosine-derived metabolite produced by gut bacteria. The product 4-EPS crosses the blood-brain barrier and may negatively regulate oligodendrocyte maturation and myelination, affecting the functional connectivity of different brain regions associated with the limbic system. This Mus musculus (Mouse) protein is Sulfotransferase 1B1.